Here is a 770-residue protein sequence, read N- to C-terminus: Transcription activator AMTR1 (770 aa).

Positions 7–34 form a DNA-binding region, zn(2)-C6 fungal-type; that stretch reads CLTCRQRKLKCDEKKPVCRQCAKASREC.

Its subcellular location is the nucleus. Transcription factor that regulates the expression of the gene clusters that mediate the biosynthesis of AM-toxins, host-selective toxins (HSTs) causing Alternaria blotch on apple, a worldwide distributed disease. AM-toxins have two target sites for affecting susceptible apple cells; they cause invagination of the plasma membrane and electrolyte loss and chloroplast disorganization. In Alternaria alternata (Alternaria rot fungus), this protein is Transcription activator AMTR1.